The chain runs to 438 residues: PHAF1 protein CG7083 (438 aa).

The protein belongs to the PHAF1 family.

It localises to the cytoplasm. The protein resides in the preautophagosomal structure. Functionally, may play a regulatory role in autophagic activity. The polypeptide is PHAF1 protein CG7083 (Drosophila melanogaster (Fruit fly)).